The chain runs to 434 residues: G2/mitotic-specific cyclin-2 (434 aa).

Belongs to the cyclin family. Cyclin AB subfamily. As to quaternary structure, interacts with the CDC2 protein kinase to form a serine/threonine kinase holoenzyme complex also known as maturation promoting factor (MPF). The cyclin subunit imparts substrate specificity to the complex.

Essential for the control of the cell cycle at the G2/M (mitosis) transition. In Medicago sativa subsp. varia (Alfalfa), this protein is G2/mitotic-specific cyclin-2.